Reading from the N-terminus, the 352-residue chain is Molybdenum import ATP-binding protein ModC (352 aa).

The 229-residue stretch at 1–229 (MLELNFSQTL…SVMNPWLPKE (229 aa)) folds into the ABC transporter domain. 31–38 (GVSGAGKT) is a binding site for ATP. The 64-residue stretch at 289–352 (QTSIRNVLRA…AQIKSVSITA (64 aa)) folds into the Mop domain.

The protein belongs to the ABC transporter superfamily. Molybdate importer (TC 3.A.1.8) family. As to quaternary structure, the complex is composed of two ATP-binding proteins (ModC), two transmembrane proteins (ModB) and a solute-binding protein (ModA).

It localises to the cell inner membrane. The catalysed reaction is molybdate(out) + ATP + H2O = molybdate(in) + ADP + phosphate + H(+). Functionally, part of the ABC transporter complex ModABC involved in molybdenum import. Responsible for energy coupling to the transport system. The protein is Molybdenum import ATP-binding protein ModC of Shigella dysenteriae serotype 1 (strain Sd197).